A 292-amino-acid chain; its full sequence is GTP cyclohydrolase FolE2 (292 aa).

Belongs to the GTP cyclohydrolase IV family.

The enzyme catalyses GTP + H2O = 7,8-dihydroneopterin 3'-triphosphate + formate + H(+). It participates in cofactor biosynthesis; 7,8-dihydroneopterin triphosphate biosynthesis; 7,8-dihydroneopterin triphosphate from GTP: step 1/1. Functionally, converts GTP to 7,8-dihydroneopterin triphosphate. This is GTP cyclohydrolase FolE2 from Staphylococcus epidermidis (strain ATCC 35984 / DSM 28319 / BCRC 17069 / CCUG 31568 / BM 3577 / RP62A).